We begin with the raw amino-acid sequence, 527 residues long: Probable protein kinase UbiB (527 aa).

The Protein kinase domain occupies Asp-118 to Gly-501. ATP contacts are provided by residues Val-124–Val-132 and Lys-150. Residue Asp-285 is the Proton acceptor of the active site. The helical transmembrane segment at Leu-502–Ile-522 threads the bilayer.

This sequence belongs to the ABC1 family. UbiB subfamily.

It is found in the cell inner membrane. The protein operates within cofactor biosynthesis; ubiquinone biosynthesis [regulation]. In terms of biological role, is probably a protein kinase regulator of UbiI activity which is involved in aerobic coenzyme Q (ubiquinone) biosynthesis. The chain is Probable protein kinase UbiB from Paraburkholderia phymatum (strain DSM 17167 / CIP 108236 / LMG 21445 / STM815) (Burkholderia phymatum).